The primary structure comprises 350 residues: MSAASPLRWQLTEHAPLRALNTFHVDATARWLLNIHAPEALPDALAAPQIAGQPLLVLGSGSNVLLAGDPPGCVLCFDNRDITIIAHHADHAIVRAGAGVNWHGLVMYSLQQGLSGLENLALIPGTVGACPIQNIGAYGAQVSDFIHVVEAYDRGSQQFVRMTPAECAFGYRDSVFKQQPDRYLIVAVEFNLPLLHELRLDYAGIRDELARMGAELAGAADVAQAVINIRQRKLPDPEVLGNAGSFFKNPLLPSEQIAALQASFADMPVFPGEQPGQGKLSAAWLIEQCGWKGKREGDAGISEAHALVLVNHGSASGAQLLAFARQVAESVRERYSVILEPEPRVIGAHW.

The FAD-binding PCMH-type domain occupies 24 to 195 (HVDATARWLL…VAVEFNLPLL (172 aa)). R172 is an active-site residue. S245 functions as the Proton donor in the catalytic mechanism. Residue E342 is part of the active site.

This sequence belongs to the MurB family. FAD serves as cofactor.

The protein resides in the cytoplasm. It catalyses the reaction UDP-N-acetyl-alpha-D-muramate + NADP(+) = UDP-N-acetyl-3-O-(1-carboxyvinyl)-alpha-D-glucosamine + NADPH + H(+). Its pathway is cell wall biogenesis; peptidoglycan biosynthesis. Cell wall formation. The protein is UDP-N-acetylenolpyruvoylglucosamine reductase of Xanthomonas campestris pv. campestris (strain B100).